The chain runs to 110 residues: UPF0060 membrane protein Pnap_4944 (110 aa).

The next 4 helical transmembrane spans lie at 8-28 (ILFA…WLVL), 33-53 (SLLL…LLTL), 65-85 (YGGM…GIAL), and 88-108 (WDLS…MQPS).

It belongs to the UPF0060 family.

The protein resides in the cell inner membrane. The protein is UPF0060 membrane protein Pnap_4944 of Polaromonas naphthalenivorans (strain CJ2).